Reading from the N-terminus, the 190-residue chain is Probable nicotinate-nucleotide adenylyltransferase (190 aa).

The protein belongs to the NadD family.

It catalyses the reaction nicotinate beta-D-ribonucleotide + ATP + H(+) = deamido-NAD(+) + diphosphate. The protein operates within cofactor biosynthesis; NAD(+) biosynthesis; deamido-NAD(+) from nicotinate D-ribonucleotide: step 1/1. Catalyzes the reversible adenylation of nicotinate mononucleotide (NaMN) to nicotinic acid adenine dinucleotide (NaAD). This is Probable nicotinate-nucleotide adenylyltransferase from Staphylococcus saprophyticus subsp. saprophyticus (strain ATCC 15305 / DSM 20229 / NCIMB 8711 / NCTC 7292 / S-41).